We begin with the raw amino-acid sequence, 1069 residues long: MNTGGRLIAGSHNRNEFVLINADESARIRSVEELSGQTCQICGDEIELSVDGESFVACNECAFPVCRPCYEYERREGNQSCPQCKTRYKRIKGSPRVEGDEEDDGIDDLDFEFDYSRSGLESETFSRRNSEFDLASAPPGSQIPLLTYGEEDVEISSDSHALIVSPSPGHIHRVHQPHFPDPAAHPRPMVPQKDLAVYGYGSVAWKDRMEEWKRKQNEKYQVVKHDGDSSLGDGDDADIPMMDEGRQPLSRKVPIKSSKINPYRMLIVLRLVILGLFFHYRILHPVNDAYALWLISVICEIWFAVSWVLDQFPKWYPIERETYLDRLSLRYEKEGKPSELAGVDVFVSTVDPMKEPPLITANTVLSILAVDYPVDRVACYVSDDGAAMLTFEALSETAEFARKWVPFCKKYTIEPRAPEWYFCHKMDYLKNKVHPAFVRERRAMKRDYEEFKVKINALVATAQKVPEEGWTMQDGTPWPGNNVRDHPGMIQVFLGNNGVRDVENNELPRLVYVSREKRPGFDHHKKAGAMNSLIRVSGVLSNAPYLLNVDCDHYINNSKALREAMCFMMDPQSGKKICYVQFPQRFDGIDKSDRYSNRNVVFFDINMKGLDGLQGPIYVGTGCVFRRQALYGFDAPKKKKTKRMTCNCWPKWCLFCCGLRKNRKSKTTDKKKKNREASKQIHALENIEEGTKGTNDAAKSPEAAQLKLEKKFGQSPVFVASAGMENGGLARNASPASLLREAIQVISCGYEDKTEWGKEIGWIYGSVTEDILTGFKMHSHGWRSVYCTPKIPAFKGSAPINLSDRLHQVLRWALGSVEIFLSRHCPIWYGYGGGLKWLERLSYINSVVYPWTSIPLLVYCSLPAICLLTGKFIVPEISNYASILFMALFGSIAVTGILEMQWGKVGIDDWWRNEQFWVIGGVSAHLFALFQGLLKVLAGVETNFTVTSKAADDGEFSELYIFKWTSLLIPPTTLLIINVIGVIVGISDAISNGYDSWGPLFGRLFFAFWVILHLYPFLKGLLGKQDRMPTIILVWSILLASILTLLWVRVNPFVAKGGPILEICGLDCL.

Met-1 carries the N-acetylmethionine modification. The Cytoplasmic segment spans residues 1-265 (MNTGGRLIAG…KSSKINPYRM (265 aa)). Positions 39, 42, 58, 61, 66, 69, 81, and 84 each coordinate Zn(2+). Residues 39–85 (CQICGDEIELSVDGESFVACNECAFPVCRPCYEYERREGNQSCPQCK) form an RING-type; degenerate zinc finger. Phosphoserine is present on residues Ser-229 and Ser-230. A helical membrane pass occupies residues 266–286 (LIVLRLVILGLFFHYRILHPV). Over 287–288 (ND) the chain is Extracellular. The helical transmembrane segment at 289-309 (AYALWLISVICEIWFAVSWVL) threads the bilayer. Residues 310 to 853 (DQFPKWYPIE…INSVVYPWTS (544 aa)) lie on the Cytoplasmic side of the membrane. Ser-348, Lys-354, Glu-355, and Asp-384 together coordinate UDP-alpha-D-glucose. Asp-384 is an active-site residue. Positions 438-464 (VRERRAMKRDYEEFKVKINALVATAQK) form a coiled coil. Lys-525 serves as a coordination point for UDP-alpha-D-glucose. Mn(2+)-binding residues include Lys-526 and Asp-550. Asp-770 is an active-site residue. The chain crosses the membrane as a helical span at residues 854–874 (IPLLVYCSLPAICLLTGKFIV). At 875 to 879 (PEISN) the chain is on the extracellular side. Residues 880 to 900 (YASILFMALFGSIAVTGILEM) form a helical membrane-spanning segment. Topologically, residues 901-915 (QWGKVGIDDWWRNEQ) are cytoplasmic. Residues 916–936 (FWVIGGVSAHLFALFQGLLKV) form a helical membrane-spanning segment. At 937–965 (LAGVETNFTVTSKAADDGEFSELYIFKWT) the chain is on the extracellular side. N-linked (GlcNAc...) asparagine glycosylation occurs at Asn-943. Residues 966 to 986 (SLLIPPTTLLIINVIGVIVGI) form a helical membrane-spanning segment. Over 987 to 997 (SDAISNGYDSW) the chain is Cytoplasmic. The helical transmembrane segment at 998–1018 (GPLFGRLFFAFWVILHLYPFL) threads the bilayer. The Extracellular portion of the chain corresponds to 1019-1027 (KGLLGKQDR). A helical membrane pass occupies residues 1028 to 1048 (MPTIILVWSILLASILTLLWV). The Cytoplasmic portion of the chain corresponds to 1049–1069 (RVNPFVAKGGPILEICGLDCL).

Belongs to the glycosyltransferase 2 family. Plant cellulose synthase subfamily. Zn(2+) serves as cofactor. Mn(2+) is required as a cofactor. In terms of tissue distribution, expressed in young plants, stems and flowers.

The protein localises to the cell membrane. The enzyme catalyses [(1-&gt;4)-beta-D-glucosyl](n) + UDP-alpha-D-glucose = [(1-&gt;4)-beta-D-glucosyl](n+1) + UDP + H(+). Its pathway is glycan metabolism; plant cellulose biosynthesis. Functionally, catalytic subunit of cellulose synthase terminal complexes ('rosettes'), required for beta-1,4-glucan microfibril crystallization, a major mechanism of the cell wall formation. This chain is Cellulose synthase A catalytic subunit 5 [UDP-forming], found in Arabidopsis thaliana (Mouse-ear cress).